Here is a 384-residue protein sequence, read N- to C-terminus: S-adenosylmethionine synthase (384 aa).

Residue H15 coordinates ATP. A Mg(2+)-binding site is contributed by D17. E43 contributes to the K(+) binding site. Residues E56 and Q99 each contribute to the L-methionine site. The tract at residues 99–109 (QSPDINQGVDR) is flexible loop. Residues 164–166 (DAK), 230–231 (RF), D239, 245–246 (RK), A262, and K266 contribute to the ATP site. D239 is an L-methionine binding site. K270 is an L-methionine binding site.

This sequence belongs to the AdoMet synthase family. Homotetramer; dimer of dimers. Mg(2+) is required as a cofactor. K(+) serves as cofactor.

Its subcellular location is the cytoplasm. The enzyme catalyses L-methionine + ATP + H2O = S-adenosyl-L-methionine + phosphate + diphosphate. It participates in amino-acid biosynthesis; S-adenosyl-L-methionine biosynthesis; S-adenosyl-L-methionine from L-methionine: step 1/1. Catalyzes the formation of S-adenosylmethionine (AdoMet) from methionine and ATP. The overall synthetic reaction is composed of two sequential steps, AdoMet formation and the subsequent tripolyphosphate hydrolysis which occurs prior to release of AdoMet from the enzyme. In Cronobacter sakazakii (strain ATCC BAA-894) (Enterobacter sakazakii), this protein is S-adenosylmethionine synthase.